A 295-amino-acid chain; its full sequence is Xyloglucan endotransglucosylase protein 2 (295 aa).

Residues 1–23 (MAMGTHFGGLWLALLCMVSATMG) form the signal peptide. Positions 24–222 (AVPRKPVDVP…WSKAPFVASY (199 aa)) constitute a GH16 domain. Glu108 functions as the Nucleophile in the catalytic mechanism. Catalysis depends on Glu112, which acts as the Proton donor. Glu112 serves as a coordination point for xyloglucan. Asn116 is a glycosylation site (N-linked (GlcNAc...) asparagine). Residues 125-127 (QTN), 135-137 (DRE), 201-202 (DW), and Gly206 contribute to the xyloglucan site. Intrachain disulfides connect Cys230/Cys239 and Cys276/Cys289. Residue Arg281 participates in xyloglucan binding.

It belongs to the glycosyl hydrolase 16 family. XTH group 1 subfamily. Contains at least one intrachain disulfide bond essential for its enzymatic activity. In terms of tissue distribution, expressed in fruit pulp.

The protein resides in the secreted. Its subcellular location is the cell wall. It is found in the extracellular space. The protein localises to the apoplast. The catalysed reaction is breaks a beta-(1-&gt;4) bond in the backbone of a xyloglucan and transfers the xyloglucanyl segment on to O-4 of the non-reducing terminal glucose residue of an acceptor, which can be a xyloglucan or an oligosaccharide of xyloglucan.. Its function is as follows. Catalyzes xyloglucan endotransglycosylation (XET). Cleaves and religates xyloglucan polymers. Does not catalyze xyloglucan endohydrolysis (XEH). Probably involved in cell wall restructuring during fruit ripening and postharvest fruit softening. This Diospyros kaki (Kaki persimmon) protein is Xyloglucan endotransglucosylase protein 2.